The chain runs to 277 residues: MKIAKVINNNVISVVNEQGKELVVMGRGLAFQKKSGDDVDEARIEKVFTLDNKDVSEKFKTLLYDIPIECMEVSEEIISYAKLQLGKKLNDSIYVSLTDHINFAIQRNQKGLDIKNALLWETKRLYKDEFAIGKEALVMVKNKTGVSLPEDEAGFIALHIVNAELNEEMPNIINITKVMQEILSIVKYHFKIEFNEESLHYYRFVTHLKFFAQRLFNGTHMESQDDFLLDTVKEKYHRAYECTKKIQTYIEREYEHKLTSDELLYLTIHIERVVKQA.

2 PRD domains span residues 65 to 170 (DIPI…EEMP) and 171 to 277 (NIIN…VKQA).

Belongs to the transcriptional antiterminator BglG family. Post-translationally, phosphorylated.

Mediates positive regulation of the glucanase operon (licST) by functioning as an antiterminator factor of transcription. Prevents termination at terminator lic-t. The polypeptide is Transcription antiterminator LicT (licT) (Bacillus subtilis (strain 168)).